The following is a 214-amino-acid chain: Ribosomal RNA small subunit methyltransferase G (214 aa).

S-adenosyl-L-methionine-binding positions include glycine 72, phenylalanine 77, 125-126 (VE), and arginine 141.

Belongs to the methyltransferase superfamily. RNA methyltransferase RsmG family.

The protein resides in the cytoplasm. It catalyses the reaction guanosine(527) in 16S rRNA + S-adenosyl-L-methionine = N(7)-methylguanosine(527) in 16S rRNA + S-adenosyl-L-homocysteine. Specifically methylates the N7 position of guanine in position 527 of 16S rRNA. This chain is Ribosomal RNA small subunit methyltransferase G, found in Sinorhizobium fredii (strain NBRC 101917 / NGR234).